A 111-amino-acid chain; its full sequence is Large ribosomal subunit protein uL22 (111 aa).

The protein belongs to the universal ribosomal protein uL22 family. In terms of assembly, part of the 50S ribosomal subunit.

In terms of biological role, this protein binds specifically to 23S rRNA; its binding is stimulated by other ribosomal proteins, e.g. L4, L17, and L20. It is important during the early stages of 50S assembly. It makes multiple contacts with different domains of the 23S rRNA in the assembled 50S subunit and ribosome. Its function is as follows. The globular domain of the protein is located near the polypeptide exit tunnel on the outside of the subunit, while an extended beta-hairpin is found that lines the wall of the exit tunnel in the center of the 70S ribosome. The polypeptide is Large ribosomal subunit protein uL22 (Francisella tularensis subsp. tularensis (strain FSC 198)).